The primary structure comprises 102 residues: PqqA binding protein (102 aa).

The protein belongs to the PqqD family. As to quaternary structure, monomer. Interacts with PqqE.

It participates in cofactor biosynthesis; pyrroloquinoline quinone biosynthesis. Functions as a PqqA binding protein and presents PqqA to PqqE, in the pyrroloquinoline quinone (PQQ) biosynthetic pathway. This chain is PqqA binding protein, found in Rhodopseudomonas palustris (strain HaA2).